We begin with the raw amino-acid sequence, 117 residues long: uncharacterized protein (117 aa).

The tract at residues 1–20 (METKKLIGKPLQPARPVRHL) is disordered.

This is an uncharacterized protein from Homo sapiens (Human).